The primary structure comprises 294 residues: Proline iminopeptidase (294 aa).

The region spanning 27-277 (PPLVLLHGGP…GCGHMSFVEK (251 aa)) is the AB hydrolase-1 domain. Residue Ser-105 is the Nucleophile of the active site. Asp-244 is an active-site residue. The active-site Proton donor is His-271.

The protein belongs to the peptidase S33 family.

It localises to the cell envelope. The enzyme catalyses Release of N-terminal proline from a peptide.. Its function is as follows. Releases the N-terminal proline from various substrates. The chain is Proline iminopeptidase from Lactobacillus helveticus (strain DPC 4571).